A 462-amino-acid polypeptide reads, in one-letter code: Toxin CfTX-2 (462 aa).

The N-terminal stretch at 1 to 17 (MILVSLLPLLFMTGIAS) is a signal peptide.

Belongs to the jellyfish toxin family. Type I subfamily. In terms of assembly, oligomer. Contains disulfide bonds. Nematocytes.

It is found in the secreted. Its subcellular location is the nematocyst. It localises to the target cell membrane. Its function is as follows. May cause profound effects on the cardiovascular system of anesthetized rats (at 25 ug/kg), since the fraction containing this toxin and CfTX-1 produces an initial increase in mean arterial pressure, followed by cardiovascular collapse in all animals within 1 minute of injection. To note, the same fraction does not induce significant change in heart rate. Has weak hemolytic activity. Is lethal to crayfish. Causes cutaneous inflammation in humans. May act as a pore-forming toxin, disrupting normal transmembrane ion concentration gradients in susceptible cells. This chain is Toxin CfTX-2, found in Chironex fleckeri (Australian box jellyfish).